The chain runs to 340 residues: MRVYYDRDCDINLIKDKKVAILGYGSQGHAHALNLRDSGAKNVVVALREGSPSAKKAEAEGLKVMGIAEAAAWCDLIMFTMPDELQAETYKKYVHDNLKEGSAIAFAHGLNVHFGLIEPKPGVDVIMMAPKGPGHTVRGEYVKGGGVPCLVAVHNDATGKAMEIGLSYCSAIGGGRSGIIETNFRQECETDLFGEQAVLCGGLVELIRMGFETLVEAGYEPEMAYFECLHEVKLIVDLIYEGGIANMNYSISNTAEYGEYVSGPRILPYEETKARMKAVLTDIQTGKFVRDFMQENAVGQPFFKATRRINDEHQIEKVGEKLRGMMPWISKGKMVDRARN.

A KARI N-terminal Rossmann domain is found at 1–182; the sequence is MRVYYDRDCD…GGGRSGIIET (182 aa). NADP(+)-binding positions include 24 to 27, arginine 48, serine 51, serine 53, and 83 to 86; these read YGSQ and DELQ. The active site involves histidine 108. Glycine 134 lines the NADP(+) pocket. A KARI C-terminal knotted domain is found at 183-329; the sequence is NFRQECETDL…EKLRGMMPWI (147 aa). Residues aspartate 191, glutamate 195, glutamate 227, and glutamate 231 each coordinate Mg(2+). Serine 252 lines the substrate pocket.

The protein belongs to the ketol-acid reductoisomerase family. Mg(2+) is required as a cofactor.

It catalyses the reaction (2R)-2,3-dihydroxy-3-methylbutanoate + NADP(+) = (2S)-2-acetolactate + NADPH + H(+). The enzyme catalyses (2R,3R)-2,3-dihydroxy-3-methylpentanoate + NADP(+) = (S)-2-ethyl-2-hydroxy-3-oxobutanoate + NADPH + H(+). It functions in the pathway amino-acid biosynthesis; L-isoleucine biosynthesis; L-isoleucine from 2-oxobutanoate: step 2/4. The protein operates within amino-acid biosynthesis; L-valine biosynthesis; L-valine from pyruvate: step 2/4. In terms of biological role, involved in the biosynthesis of branched-chain amino acids (BCAA). Catalyzes an alkyl-migration followed by a ketol-acid reduction of (S)-2-acetolactate (S2AL) to yield (R)-2,3-dihydroxy-isovalerate. In the isomerase reaction, S2AL is rearranged via a Mg-dependent methyl migration to produce 3-hydroxy-3-methyl-2-ketobutyrate (HMKB). In the reductase reaction, this 2-ketoacid undergoes a metal-dependent reduction by NADPH to yield (R)-2,3-dihydroxy-isovalerate. This is Ketol-acid reductoisomerase (NADP(+)) from Cereibacter sphaeroides (strain ATCC 17025 / ATH 2.4.3) (Rhodobacter sphaeroides).